We begin with the raw amino-acid sequence, 542 residues long: Sterile alpha motif domain-containing protein 11 (542 aa).

The segment at 268 to 364 (LLALPPQGPP…GRGLLSGSTL (97 aa)) is disordered. Residues 273–285 (PQGPPGPGPPIPP) are compositionally biased toward pro residues. Thr342 is modified (phosphothreonine). An SAM domain is found at 404 to 469 (WTVDDVCNFV…AQVAKRLGRV (66 aa)). Residues 486-542 (LQAPELSPGHQPLSPATTTSPYEGTHLPTGQASPKQENGSGTIALLSGAPDPSQLLQ) form a disordered region. Ser499 is subject to Phosphoserine. Positions 499-526 (SPATTTSPYEGTHLPTGQASPKQENGSG) are enriched in polar residues.

As to quaternary structure, self-associates. Component of a Polycomb group (PcG) multiprotein PRC1-like complex. Interacts with SAMD7 and PHC2. In terms of tissue distribution, expressed in the outer nuclear layer of rod photoreceptors in the retina (at protein level). Predominantly expressed in retinal photoreceptors and pineal gland.

The protein localises to the nucleus. Its function is as follows. Component of a Polycomb group (PcG) multiprotein PRC1-like complex, essential for establishing rod photoreceptor cell identity and function by silencing nonrod gene expression in developing rod photoreceptor cells. The polypeptide is Sterile alpha motif domain-containing protein 11 (Samd11) (Mus musculus (Mouse)).